The sequence spans 284 residues: Acetyl-coenzyme A carboxylase carboxyl transferase subunit beta (284 aa).

A CoA carboxyltransferase N-terminal domain is found at 27–284 (LMTKCPSCKY…ELHDGGVRHV (258 aa)). 4 residues coordinate Zn(2+): cysteine 31, cysteine 34, cysteine 50, and cysteine 52. The C4-type zinc-finger motif lies at 31–52 (CPSCKYMHYTKQLNENHKVCDC).

It belongs to the AccD/PCCB family. As to quaternary structure, acetyl-CoA carboxylase is a heterohexamer composed of biotin carboxyl carrier protein (AccB), biotin carboxylase (AccC) and two subunits each of ACCase subunit alpha (AccA) and ACCase subunit beta (AccD). Zn(2+) serves as cofactor.

The protein localises to the cytoplasm. It catalyses the reaction N(6)-carboxybiotinyl-L-lysyl-[protein] + acetyl-CoA = N(6)-biotinyl-L-lysyl-[protein] + malonyl-CoA. The protein operates within lipid metabolism; malonyl-CoA biosynthesis; malonyl-CoA from acetyl-CoA: step 1/1. Functionally, component of the acetyl coenzyme A carboxylase (ACC) complex. Biotin carboxylase (BC) catalyzes the carboxylation of biotin on its carrier protein (BCCP) and then the CO(2) group is transferred by the transcarboxylase to acetyl-CoA to form malonyl-CoA. This chain is Acetyl-coenzyme A carboxylase carboxyl transferase subunit beta, found in Exiguobacterium sp. (strain ATCC BAA-1283 / AT1b).